A 183-amino-acid polypeptide reads, in one-letter code: Inner membrane-spanning protein YciB (183 aa).

Helical transmembrane passes span 22–44, 53–73, 76–96, 121–141, and 153–173; these read VQAAAITLVLATILQLILVRILF, IVGLSVIIFGILTAYFDDLAF, WKVTIINGLFAAVLLISQYVF, LGWAIFFIICMLINIIISQLF, and GFTGLSLVAVIITGIYLYPYI.

The protein belongs to the YciB family.

The protein localises to the cell inner membrane. Its function is as follows. Plays a role in cell envelope biogenesis, maintenance of cell envelope integrity and membrane homeostasis. The sequence is that of Inner membrane-spanning protein YciB from Haemophilus ducreyi (strain 35000HP / ATCC 700724).